We begin with the raw amino-acid sequence, 626 residues long: FAD-binding monooxygenase moxY (626 aa).

The span at 1-23 (MAPFLSAHGESASSSSSSSPTPS) shows a compositional bias: low complexity. The disordered stretch occupies residues 1 to 47 (MAPFLSAHGESASSSSSSSPTPSRHTRNQHVDYSTPGSTGYNIPQNT). Residues 31-47 (VDYSTPGSTGYNIPQNT) show a composition bias toward polar residues. Residues 96–99 (TWLE), 108–109 (DI), and Y114 contribute to the FAD site. An NADP(+)-binding site is contributed by 106–108 (GCD). NADP(+)-binding positions include 243 to 249 (SGASSIQ) and 266 to 267 (RT).

This sequence belongs to the FAD-binding monooxygenase family. Requires FAD as cofactor.

The protein operates within mycotoxin biosynthesis. Its function is as follows. FAD-binding monooxygenase; part of the fragmented gene cluster that mediates the biosynthesis of dothistromin (DOTH), a polyketide toxin very similar in structure to the aflatoxin precursor, versicolorin B. The first step of the pathway is the conversion of acetate to norsolorinic acid (NOR) and requires the fatty acid synthase subunits hexA and hexB, as well as the polyketide synthase pksA. PksA combines a hexanoyl starter unit and 7 malonyl-CoA extender units to synthesize the precursor NOR. The hexanoyl starter unit is provided to the acyl-carrier protein (ACP) domain by the fungal fatty acid synthase hexA/hexB. The second step is the conversion of NOR to averantin (AVN) and requires the norsolorinic acid ketoreductase nor1, which catalyzes the dehydration of norsolorinic acid to form (1'S)-averantin. The cytochrome P450 monooxygenase avnA then catalyzes the hydroxylation of AVN to 5'hydroxyaverantin (HAVN). The next step is performed by adhA that transforms HAVN to averufin (AVF). Averufin might then be converted to hydroxyversicolorone by cypX and avfA. Hydroxyversicolorone is further converted versiconal hemiacetal acetate (VHA) by moxY. VHA is then the substrate for the versiconal hemiacetal acetate esterase est1 to yield versiconal (VAL). Versicolorin B synthase vbsA then converts VAL to versicolorin B (VERB) by closing the bisfuran ring. Then, the activity of the versicolorin B desaturase verB leads to versicolorin A (VERA). DotB, a predicted chloroperoxidase, may perform epoxidation of the A-ring of VERA. Alternatively, a cytochrome P450, such as cypX or avnA could catalyze this step. It is also possible that another, uncharacterized, cytochrome P450 enzyme is responsible for this step. Opening of the epoxide could potentially be achieved by the epoxide hydrolase epoA. However, epoA seems not to be required for DOTH biosynthesis, but other epoxide hydrolases may have the ability to complement this hydrolysis. Alternatively, opening of the epoxide ring could be achieved non-enzymatically. The next step is the deoxygenation of ring A to yield the 5,8-dihydroxyanthraquinone which is most likely catalyzed by the NADPH dehydrogenase encoded by ver1. The last stages of DOTH biosynthesis are proposed to involve hydroxylation of the bisfuran. OrdB and norB might have oxidative roles here. An alternative possibility is that cytochrome P450 monoogenases such as avnA and cypX might perform these steps in addition to previously proposed steps. This is FAD-binding monooxygenase moxY from Dothistroma septosporum (Red band needle blight fungus).